We begin with the raw amino-acid sequence, 900 residues long: Isoleucine--tRNA ligase (900 aa).

Positions 58–68 match the 'HIGH' region motif; the sequence is PYANGNIHIGH. E552 is a binding site for L-isoleucyl-5'-AMP. The 'KMSKS' region signature appears at 593–597; the sequence is KMSKS. K596 is a binding site for ATP.

It belongs to the class-I aminoacyl-tRNA synthetase family. IleS type 1 subfamily. In terms of assembly, monomer.

Its subcellular location is the cytoplasm. It catalyses the reaction tRNA(Ile) + L-isoleucine + ATP = L-isoleucyl-tRNA(Ile) + AMP + diphosphate. Its function is as follows. Catalyzes the attachment of isoleucine to tRNA(Ile). As IleRS can inadvertently accommodate and process structurally similar amino acids such as valine, to avoid such errors it has two additional distinct tRNA(Ile)-dependent editing activities. One activity is designated as 'pretransfer' editing and involves the hydrolysis of activated Val-AMP. The other activity is designated 'posttransfer' editing and involves deacylation of mischarged Val-tRNA(Ile). This chain is Isoleucine--tRNA ligase, found in Ureaplasma parvum serovar 3 (strain ATCC 700970).